Reading from the N-terminus, the 354-residue chain is Neuronal growth regulator 1 (354 aa).

The first 37 residues, 1-37 (MDMMLLVQGACCSNQWLAAVLLSLCCLLPSCLPAGQS), serve as a signal peptide directing secretion. Ig-like C2-type domains follow at residues 38–134 (VDFP…VHLT), 139–221 (PKIY…KVVV), and 225–313 (PTIQ…LPLN). A disulfide bridge links C60 with C118. N73 and N155 each carry an N-linked (GlcNAc...) asparagine glycan. Disulfide bonds link C160-C203 and C245-C297. Phosphotyrosine is present on Y187. N275, N286, N294, and N307 each carry an N-linked (GlcNAc...) asparagine glycan. The GPI-anchor amidated glycine moiety is linked to residue G324. Residues 325 to 354 (SADVLFSCWYLVLTLSSFTSIFYLKNAILQ) constitute a propeptide, removed in mature form.

The protein belongs to the immunoglobulin superfamily. IgLON family.

It is found in the cell membrane. In terms of biological role, may be involved in cell-adhesion. May function as a trans-neural growth-promoting factor in regenerative axon sprouting in the mammalian brain. This is Neuronal growth regulator 1 (NEGR1) from Homo sapiens (Human).